The chain runs to 312 residues: Olfactory receptor-like protein COR5 (312 aa).

Residues 1 to 26 (MALGNCTTPTTFILSGLTDNPRLQMP) are Extracellular-facing. N-linked (GlcNAc...) asparagine glycosylation is present at Asn-5. Residues 27 to 49 (LFMVFLAIYTITLLANLGLIALI) traverse the membrane as a helical segment. Over 50–57 (SVDFHLQT) the chain is Cytoplasmic. A helical membrane pass occupies residues 58–79 (PMYIFLQNLSFTDAAYSTVITP). Residues 80 to 100 (KMLATFLEERRTISYVGCILQ) are Extracellular-facing. An intrachain disulfide couples Cys-97 to Cys-179. A helical membrane pass occupies residues 101 to 120 (YFSFVLLTSSECLLLAVMAY). Topologically, residues 121-139 (DRYVAICKPLLYPAIMTKA) are cytoplasmic. A helical transmembrane segment spans residues 140 to 164 (VCWRLVEGLYSLAFLNSLVHTSGLL). Residues 165–205 (KLSFCSSNVVNHFFCDNSPLFQISSSSTTLNELLVFIFGSW) are Extracellular-facing. A helical membrane pass occupies residues 206-226 (FAMSSIITTPISYVFIILTVV). At 227-239 (RIRSKDGKYKAFS) the chain is on the cytoplasmic side. The chain crosses the membrane as a helical span at residues 240 to 260 (TCTSHLMAVSLFHGTVIFMYL). The Extracellular segment spans residues 261-271 (RPVKLFSLDTD). A helical transmembrane segment spans residues 272-292 (KIASLFYTVVIPMLNPLIYSW). Residues 293–312 (RNKEVKDALRRVIATNVWIH) are Cytoplasmic-facing.

This sequence belongs to the G-protein coupled receptor 1 family.

The protein localises to the cell membrane. Functionally, odorant receptor. The sequence is that of Olfactory receptor-like protein COR5 (COR5) from Gallus gallus (Chicken).